Reading from the N-terminus, the 166-residue chain is Small ribosomal subunit protein uS5 (166 aa).

The S5 DRBM domain occupies 11-74; the sequence is LVEKLVAVDR…EAARRNMITV (64 aa).

Belongs to the universal ribosomal protein uS5 family. Part of the 30S ribosomal subunit. Contacts proteins S4 and S8.

Its function is as follows. With S4 and S12 plays an important role in translational accuracy. Functionally, located at the back of the 30S subunit body where it stabilizes the conformation of the head with respect to the body. In Acinetobacter baumannii (strain ATCC 17978 / DSM 105126 / CIP 53.77 / LMG 1025 / NCDC KC755 / 5377), this protein is Small ribosomal subunit protein uS5.